A 368-amino-acid polypeptide reads, in one-letter code: Seipin-1 (368 aa).

A run of 3 helical transmembrane segments spans residues 26-46 (WFMV…VVLS), 101-121 (VMVL…SLYV), and 292-312 (LCVW…LWCF). Residues 344-368 (MERRRRERRNQPRRRNFATTQKSYT) are disordered. Basic residues predominate over residues 346-359 (RRRRERRNQPRRRN).

This sequence belongs to the seipin family. In terms of tissue distribution, expressed in seeds and young seedlings. Not detected in leaves.

The protein localises to the endoplasmic reticulum membrane. Involved in lipid metabolism and lipid droplet (LD) morphology, number, and size. Facilitates the formation of large-sized LDs and modulates triacylglycerol accumulation. Induces probably a reorganization of the endoplasmic reticulum into LD-forming domains. The chain is Seipin-1 from Arabidopsis thaliana (Mouse-ear cress).